The following is a 423-amino-acid chain: Gamma-glutamyl phosphate reductase (423 aa).

The protein belongs to the gamma-glutamyl phosphate reductase family.

The protein resides in the cytoplasm. The enzyme catalyses L-glutamate 5-semialdehyde + phosphate + NADP(+) = L-glutamyl 5-phosphate + NADPH + H(+). It participates in amino-acid biosynthesis; L-proline biosynthesis; L-glutamate 5-semialdehyde from L-glutamate: step 2/2. In terms of biological role, catalyzes the NADPH-dependent reduction of L-glutamate 5-phosphate into L-glutamate 5-semialdehyde and phosphate. The product spontaneously undergoes cyclization to form 1-pyrroline-5-carboxylate. The sequence is that of Gamma-glutamyl phosphate reductase from Pseudomonas putida (strain ATCC 47054 / DSM 6125 / CFBP 8728 / NCIMB 11950 / KT2440).